Reading from the N-terminus, the 460-residue chain is ATP synthase subunit beta (460 aa).

150 to 157 (GGAGVGKT) is an ATP binding site.

Belongs to the ATPase alpha/beta chains family. As to quaternary structure, F-type ATPases have 2 components, CF(1) - the catalytic core - and CF(0) - the membrane proton channel. CF(1) has five subunits: alpha(3), beta(3), gamma(1), delta(1), epsilon(1). CF(0) has three main subunits: a(1), b(2) and c(9-12). The alpha and beta chains form an alternating ring which encloses part of the gamma chain. CF(1) is attached to CF(0) by a central stalk formed by the gamma and epsilon chains, while a peripheral stalk is formed by the delta and b chains.

Its subcellular location is the cell inner membrane. It catalyses the reaction ATP + H2O + 4 H(+)(in) = ADP + phosphate + 5 H(+)(out). Functionally, produces ATP from ADP in the presence of a proton gradient across the membrane. The catalytic sites are hosted primarily by the beta subunits. This Yersinia enterocolitica serotype O:8 / biotype 1B (strain NCTC 13174 / 8081) protein is ATP synthase subunit beta.